We begin with the raw amino-acid sequence, 195 residues long: Shikimate kinase (195 aa).

Position 30 to 35 (30 to 35 (GAGKTA)) interacts with ATP. A Mg(2+)-binding site is contributed by T34. 3 residues coordinate substrate: D52, R76, and G98. R136 contributes to the ATP binding site. R155 contributes to the substrate binding site.

This sequence belongs to the shikimate kinase family. In terms of assembly, monomer. Requires Mg(2+) as cofactor.

The protein localises to the cytoplasm. It carries out the reaction shikimate + ATP = 3-phosphoshikimate + ADP + H(+). Its pathway is metabolic intermediate biosynthesis; chorismate biosynthesis; chorismate from D-erythrose 4-phosphate and phosphoenolpyruvate: step 5/7. Functionally, catalyzes the specific phosphorylation of the 3-hydroxyl group of shikimic acid using ATP as a cosubstrate. The chain is Shikimate kinase from Ruegeria pomeroyi (strain ATCC 700808 / DSM 15171 / DSS-3) (Silicibacter pomeroyi).